The sequence spans 307 residues: Manganese-dependent inorganic pyrophosphatase (307 aa).

Histidine 7, aspartate 11, aspartate 13, aspartate 66, histidine 88, and aspartate 147 together coordinate Mn(2+).

The cofactor is Mn(2+).

Its subcellular location is the cytoplasm. The catalysed reaction is diphosphate + H2O = 2 phosphate + H(+). This is Manganese-dependent inorganic pyrophosphatase (ppaC) from Methanocaldococcus jannaschii (strain ATCC 43067 / DSM 2661 / JAL-1 / JCM 10045 / NBRC 100440) (Methanococcus jannaschii).